The primary structure comprises 172 residues: 3-hydroxydecanoyl-[acyl-carrier-protein] dehydratase (172 aa).

Residue histidine 71 is part of the active site.

Belongs to the thioester dehydratase family. FabA subfamily. Homodimer.

It is found in the cytoplasm. It catalyses the reaction a (3R)-hydroxyacyl-[ACP] = a (2E)-enoyl-[ACP] + H2O. The catalysed reaction is (3R)-hydroxydecanoyl-[ACP] = (2E)-decenoyl-[ACP] + H2O. The enzyme catalyses (2E)-decenoyl-[ACP] = (3Z)-decenoyl-[ACP]. It participates in lipid metabolism; fatty acid biosynthesis. Functionally, necessary for the introduction of cis unsaturation into fatty acids. Catalyzes the dehydration of (3R)-3-hydroxydecanoyl-ACP to E-(2)-decenoyl-ACP and then its isomerization to Z-(3)-decenoyl-ACP. Can catalyze the dehydratase reaction for beta-hydroxyacyl-ACPs with saturated chain lengths up to 16:0, being most active on intermediate chain length. This chain is 3-hydroxydecanoyl-[acyl-carrier-protein] dehydratase, found in Escherichia coli (strain 55989 / EAEC).